Consider the following 253-residue polypeptide: Sporulated oocyst TA4 antigen (253 aa).

An N-terminal signal peptide occupies residues M1 to A23. Positions R182–L184 are cleaved as a propeptide — removed in mature form.

The TA4 antigen is composed of a 17 kDa and a 8 kDa chain, linked by a disulfide bond.

This Eimeria tenella (Coccidian parasite) protein is Sporulated oocyst TA4 antigen.